Here is a 199-residue protein sequence, read N- to C-terminus: Large ribosomal subunit protein bL25 (199 aa).

The disordered stretch occupies residues 1-21 (MNIEKTLSVQKREGYGKGPSG).

This sequence belongs to the bacterial ribosomal protein bL25 family. CTC subfamily. As to quaternary structure, part of the 50S ribosomal subunit; part of the 5S rRNA/L5/L18/L25 subcomplex. Contacts the 5S rRNA. Binds to the 5S rRNA independently of L5 and L18.

Functionally, this is one of the proteins that binds to the 5S RNA in the ribosome where it forms part of the central protuberance. This is Large ribosomal subunit protein bL25 from Desulfovibrio desulfuricans (strain ATCC 27774 / DSM 6949 / MB).